Reading from the N-terminus, the 485-residue chain is Glutamyl-tRNA(Gln) amidotransferase subunit A (485 aa).

Residues Lys80 and Ser155 each act as charge relay system in the active site. The active-site Acyl-ester intermediate is the Ser179.

It belongs to the amidase family. GatA subfamily. Heterotrimer of A, B and C subunits.

It carries out the reaction L-glutamyl-tRNA(Gln) + L-glutamine + ATP + H2O = L-glutaminyl-tRNA(Gln) + L-glutamate + ADP + phosphate + H(+). Functionally, allows the formation of correctly charged Gln-tRNA(Gln) through the transamidation of misacylated Glu-tRNA(Gln) in organisms which lack glutaminyl-tRNA synthetase. The reaction takes place in the presence of glutamine and ATP through an activated gamma-phospho-Glu-tRNA(Gln). This is Glutamyl-tRNA(Gln) amidotransferase subunit A from Endomicrobium trichonymphae.